The sequence spans 286 residues: Bifunctional protein FolD (286 aa).

NADP(+) is bound by residues 165 to 167 (GRS) and Ser190.

This sequence belongs to the tetrahydrofolate dehydrogenase/cyclohydrolase family. Homodimer.

It carries out the reaction (6R)-5,10-methylene-5,6,7,8-tetrahydrofolate + NADP(+) = (6R)-5,10-methenyltetrahydrofolate + NADPH. The enzyme catalyses (6R)-5,10-methenyltetrahydrofolate + H2O = (6R)-10-formyltetrahydrofolate + H(+). The protein operates within one-carbon metabolism; tetrahydrofolate interconversion. Its function is as follows. Catalyzes the oxidation of 5,10-methylenetetrahydrofolate to 5,10-methenyltetrahydrofolate and then the hydrolysis of 5,10-methenyltetrahydrofolate to 10-formyltetrahydrofolate. In Staphylococcus aureus (strain JH9), this protein is Bifunctional protein FolD.